Reading from the N-terminus, the 203-residue chain is MSSKLRVGVAGPVGSGKTALLETLCLSLKNNYEIAVVTNDIYTKEDANFLINKKVLEEGRIIGVETGGCPHTAIREDCSLNKNAVLDLENRYKPLDFVFVESGGDNLASSFSPELVDLSIYVIDVSAGDKIPRKGGPGITRSDLLLINKIDLADMVGANLNIMKSDTEFMRKGKPWFFTNLSTGIGVEEITRFLESQIPNNQN.

11–18 (GPVGSGKT) contacts GTP.

Belongs to the SIMIBI class G3E GTPase family. UreG subfamily. Homodimer. UreD, UreF and UreG form a complex that acts as a GTP-hydrolysis-dependent molecular chaperone, activating the urease apoprotein by helping to assemble the nickel containing metallocenter of UreC. The UreE protein probably delivers the nickel.

It localises to the cytoplasm. In terms of biological role, facilitates the functional incorporation of the urease nickel metallocenter. This process requires GTP hydrolysis, probably effectuated by UreG. The sequence is that of Urease accessory protein UreG from Prochlorococcus marinus (strain MIT 9312).